Reading from the N-terminus, the 933-residue chain is Isoleucine--tRNA ligase (933 aa).

Residues 57 to 67 (PYANGNIHVGH) carry the 'HIGH' region motif. L-isoleucyl-5'-AMP is bound at residue Glu-554. The 'KMSKS' region signature appears at 595-599 (KMSKS). Lys-598 provides a ligand contact to ATP.

It belongs to the class-I aminoacyl-tRNA synthetase family. IleS type 1 subfamily. Monomer.

It localises to the cytoplasm. It catalyses the reaction tRNA(Ile) + L-isoleucine + ATP = L-isoleucyl-tRNA(Ile) + AMP + diphosphate. In terms of biological role, catalyzes the attachment of isoleucine to tRNA(Ile). As IleRS can inadvertently accommodate and process structurally similar amino acids such as valine, to avoid such errors it has two additional distinct tRNA(Ile)-dependent editing activities. One activity is designated as 'pretransfer' editing and involves the hydrolysis of activated Val-AMP. The other activity is designated 'posttransfer' editing and involves deacylation of mischarged Val-tRNA(Ile). The sequence is that of Isoleucine--tRNA ligase from Streptococcus pyogenes serotype M28 (strain MGAS6180).